Consider the following 139-residue polypeptide: Putative pre-16S rRNA nuclease (139 aa).

It belongs to the YqgF nuclease family.

It is found in the cytoplasm. In terms of biological role, could be a nuclease involved in processing of the 5'-end of pre-16S rRNA. This is Putative pre-16S rRNA nuclease from Rubrobacter xylanophilus (strain DSM 9941 / JCM 11954 / NBRC 16129 / PRD-1).